A 388-amino-acid polypeptide reads, in one-letter code: Deoxyguanosinetriphosphate triphosphohydrolase-like protein (388 aa).

Positions 24–44 (HSAQTRGRVHAEPPSTSRTEF) are disordered. The 132-residue stretch at 78-209 (RLTHSLEVAQ…ANLADEVAYN (132 aa)) folds into the HD domain.

It belongs to the dGTPase family. Type 2 subfamily.

The protein is Deoxyguanosinetriphosphate triphosphohydrolase-like protein of Ralstonia pickettii (strain 12J).